Consider the following 357-residue polypeptide: Alanine racemase, catabolic (357 aa).

Lys-33 functions as the Proton acceptor; specific for D-alanine in the catalytic mechanism. Lys-33 carries the post-translational modification N6-(pyridoxal phosphate)lysine. At Lys-122 the chain carries N6-carboxylysine. Arg-129 contacts substrate. Tyr-253 (proton acceptor; specific for L-alanine) is an active-site residue. Residue Met-301 coordinates substrate.

This sequence belongs to the alanine racemase family. Homodimer. Requires pyridoxal 5'-phosphate as cofactor.

It catalyses the reaction L-alanine = D-alanine. In terms of biological role, isomerizes L-alanine to D-alanine which is then oxidized to pyruvate by DadA. This chain is Alanine racemase, catabolic, found in Pseudomonas aeruginosa (strain ATCC 15692 / DSM 22644 / CIP 104116 / JCM 14847 / LMG 12228 / 1C / PRS 101 / PAO1).